Here is an 87-residue protein sequence, read N- to C-terminus: Cytochrome c oxidase assembly factor 3, mitochondrial (87 aa).

Residues N47 to S69 traverse the membrane as a helical segment.

Belongs to the COA3 family.

It is found in the mitochondrion membrane. Its function is as follows. Plays a critical role in the biogenesis and activity of cytochrome c oxidase (COX) (complex IV). This chain is Cytochrome c oxidase assembly factor 3, mitochondrial (Ccdc56), found in Drosophila melanogaster (Fruit fly).